The sequence spans 238 residues: Ribonuclease 3 (238 aa).

The 124-residue stretch at 17–140 (YATLEKALGY…LMAGVYLEAG (124 aa)) folds into the RNase III domain. E53 contacts Mg(2+). The active site involves D57. Positions 126 and 129 each coordinate Mg(2+). Residue E129 is part of the active site. Residues 167–236 (DYKTALQELT…AYQALQKLKE (70 aa)) enclose the DRBM domain.

It belongs to the ribonuclease III family. As to quaternary structure, homodimer. It depends on Mg(2+) as a cofactor.

It localises to the cytoplasm. It carries out the reaction Endonucleolytic cleavage to 5'-phosphomonoester.. Functionally, digests double-stranded RNA. Involved in the processing of primary rRNA transcript to yield the immediate precursors to the large and small rRNAs (23S and 16S). Processes some mRNAs, and tRNAs when they are encoded in the rRNA operon. Processes pre-crRNA and tracrRNA of type II CRISPR loci if present in the organism. The protein is Ribonuclease 3 of Helicobacter pylori (strain Shi470).